The primary structure comprises 178 residues: Ribulose bisphosphate carboxylase small subunit, chloroplastic (178 aa).

A chloroplast-targeting transit peptide spans 1–54 (MASSMISSPAVTTVNRAGAGTVAPFTGLKSMAGFPTRKTNNDIASIASNGGRVQ).

This sequence belongs to the RuBisCO small chain family. Heterohexadecamer of 8 large and 8 small subunits.

It is found in the plastid. Its subcellular location is the chloroplast. Its function is as follows. RuBisCO catalyzes two reactions: the carboxylation of D-ribulose 1,5-bisphosphate, the primary event in carbon dioxide fixation, as well as the oxidative fragmentation of the pentose substrate. Both reactions occur simultaneously and in competition at the same active site. Although the small subunit is not catalytic it is essential for maximal activity. The chain is Ribulose bisphosphate carboxylase small subunit, chloroplastic from Glycine tabacina.